Consider the following 348-residue polypeptide: Protein arginine N-methyltransferase 1 (348 aa).

One can recognise an SAM-dependent MTase PRMT-type domain in the interval 20–322 (EQHYFNSYDH…EKNNRDLNIK (303 aa)). Residues His33, Arg42, Gly66, Asp88, and Glu117 each contribute to the S-adenosyl-L-methionine site. Catalysis depends on residues Glu132 and Glu141.

It belongs to the class I-like SAM-binding methyltransferase superfamily. Protein arginine N-methyltransferase family. Homodimer. The dimers can then associate to form a ring-shaped homohexamer. Interacts with NPL3, BRE5, MTR4, SNF2, SUM1, and SSD1.

The protein resides in the nucleus. The catalysed reaction is L-arginyl-[protein] + S-adenosyl-L-methionine = N(omega)-methyl-L-arginyl-[protein] + S-adenosyl-L-homocysteine + H(+). It carries out the reaction L-arginyl-[protein] + 2 S-adenosyl-L-methionine = N(omega),N(omega)-dimethyl-L-arginyl-[protein] + 2 S-adenosyl-L-homocysteine + 2 H(+). Its function is as follows. S-adenosyl-L-methionine-dependent protein-arginine N-methyltransferase that catalyzes both the mono- and asymmetric (type I) dimethylation of the guanidino nitrogens of arginine residues in a variety of RNA-binding proteins such as heterogeneous nuclear ribonucleoproteins (hnRNPs) and small nuclear ribonucleoproteins (snRNPs). Methylates NAB2, NPL3, HRP1 and YRA1, shuttling hnRNPs involved in mRNA processing and export, facilitating their export out of the nucleus. Methylation of NPL3 weakens its interaction with THO2, a component of the TREX (transcription/export) complex important for transcriptional elongation and recruitment of mRNA export factors. Methylates the hnRNP HRB1, but does not influence its subcellular location. Methylates the nucleolar proteins GAR1, NOP1 and NSR1. Methylates the snRNP SNP1 and modulates the cotranscriptional recruitment of splicing factors. Dimethylates free histone H4 (HHF1/HHF2) at 'Arg-4' (H4R3me2a) and plays a role in preservation and establishment of silent chromatin domains. Mono- and dimethylates ribosomal protein S2 (RPS2) at 'Arg-11'. Methylates the catalytic subunit of the SWI/SNF chromatin-remodeling complex SNF2. The protein is Protein arginine N-methyltransferase 1 of Saccharomyces cerevisiae (strain ATCC 204508 / S288c) (Baker's yeast).